Consider the following 77-residue polypeptide: Surfactant-associated protein 2 (77 aa).

Residues 1-19 (MESLMRLFLLLALLSSSHA) form the signal peptide. N-linked (GlcNAc...) asparagine glycosylation occurs at Asn-61.

In terms of processing, N-glycosylated. Expressed in lung, and specifically in alveolar type II epithelial cells.

The protein resides in the secreted. Its subcellular location is the cytoplasmic vesicle. It localises to the secretory vesicle. It is found in the golgi apparatus. Functionally, putative surfactant protein. The chain is Surfactant-associated protein 2 from Mus musculus (Mouse).